We begin with the raw amino-acid sequence, 343 residues long: 4-hydroxy-2-oxovalerate aldolase (343 aa).

Residues 4–254 (PRLTDTTLRD…NPGLDVFSLM (251 aa)) enclose the Pyruvate carboxyltransferase domain. Residue 12-13 (RD) coordinates substrate. Asp13 is a Mn(2+) binding site. Catalysis depends on His16, which acts as the Proton acceptor. 2 residues coordinate substrate: Ser166 and His193. The Mn(2+) site is built by His193 and His195. Tyr284 is a substrate binding site.

It belongs to the 4-hydroxy-2-oxovalerate aldolase family.

It carries out the reaction (S)-4-hydroxy-2-oxopentanoate = acetaldehyde + pyruvate. The chain is 4-hydroxy-2-oxovalerate aldolase from Chloroflexus aurantiacus (strain ATCC 29364 / DSM 637 / Y-400-fl).